We begin with the raw amino-acid sequence, 309 residues long: MTQINCTQVTEFILVGLTDRQELKMPLFVLFLSIYLFTVVGNLGLILLIRTDEKLNTPMYFFLSNLAFVDFCYSSVITPKMLGNFLYKQNSISFNACAAQLGCFLAFMTAECLLLASMAYDRYVAICNPLMYMVVMSPGICIQLVAAPHSYSILVALFHTILTFRLSYCHSNIVNHFYCDDMPLLRLTCSDTRFKQLWIFACAGIMFISSLLIVFVSYMFIISAILRMHSAEGRQKAFSTCGSHMLAVTIFYGTLIFMYLQPSSSHALDTDKMASVFYTVIIPMLNPLIYSLQNKEVKEALKKIIINKN.

The Extracellular segment spans residues 1–28 (MTQINCTQVTEFILVGLTDRQELKMPLF). N-linked (GlcNAc...) asparagine glycosylation is present at N5. A helical transmembrane segment spans residues 29-49 (VLFLSIYLFTVVGNLGLILLI). Residues 50 to 56 (RTDEKLN) are Cytoplasmic-facing. Residues 57-77 (TPMYFFLSNLAFVDFCYSSVI) traverse the membrane as a helical segment. Residues 78-97 (TPKMLGNFLYKQNSISFNAC) are Extracellular-facing. A disulfide bridge connects residues C97 and C179. Residues 98 to 118 (AAQLGCFLAFMTAECLLLASM) form a helical membrane-spanning segment. The Cytoplasmic portion of the chain corresponds to 119–143 (AYDRYVAICNPLMYMVVMSPGICIQ). A helical membrane pass occupies residues 144-164 (LVAAPHSYSILVALFHTILTF). The Extracellular segment spans residues 165–204 (RLSYCHSNIVNHFYCDDMPLLRLTCSDTRFKQLWIFACAG). Residues 205 to 225 (IMFISSLLIVFVSYMFIISAI) form a helical membrane-spanning segment. Residues 226–239 (LRMHSAEGRQKAFS) are Cytoplasmic-facing. Residues 240-260 (TCGSHMLAVTIFYGTLIFMYL) traverse the membrane as a helical segment. Topologically, residues 261–272 (QPSSSHALDTDK) are extracellular. Residues 273 to 293 (MASVFYTVIIPMLNPLIYSLQ) traverse the membrane as a helical segment. Over 294–309 (NKEVKEALKKIIINKN) the chain is Cytoplasmic.

The protein belongs to the G-protein coupled receptor 1 family.

It is found in the cell membrane. In terms of biological role, odorant receptor. In Homo sapiens (Human), this protein is Olfactory receptor 8U9 (OR8U9).